A 528-amino-acid chain; its full sequence is MSTENAHLQKEDIVIESWLHKKGEHIRNWRPRYFILFRDGTLLGFRSKPKEDQPLPEPLNNFMIRDAATVCLDKPRPNMFIVRCLQWTTVIERTFYADSADFRQMWIEAIQAVSSHNRLKENAGNTSMQEEDTNGNPSGESDVNMDATSTRSDNDFESTVMNIDEPEEVPRKNTVTMDDFDFLKVLGQGTFGKVILCREKSSDKLYAIKIIRKEMVVDRSEVAHTLTENRVLYACVHPFLTLLKYSFQAQYHICFVMEFANGGELFTHLQRCKTFSEARTRFYGSEIILALGYLHHRNIVYRDMKLENLLLDRDGHIKITDFGLCKEEIKYGDKTSTFCGTPEYLAPEVIEDIDYDRSVDWWGVGVVMYEMMCGRLPFSAKENGKLFELITTCDLKFPNRLSPEAVTLLSGLLERVPAKRLGAGPDDAREVSRAEFFKDVDWEATLRKEVEPPFKPNVMSETDTSFFDREFTSMPVQLTPPRRGEELPTVDEEEELQANFIQFASYYVSGSLERSYDTNRSADKYEIR.

Residues 12 to 115 (DIVIESWLHK…WIEAIQAVSS (104 aa)) enclose the PH domain. The segment at 121 to 153 (ENAGNTSMQEEDTNGNPSGESDVNMDATSTRSD) is disordered. A compositionally biased stretch (polar residues) spans 123-153 (AGNTSMQEEDTNGNPSGESDVNMDATSTRSD). A Protein kinase domain is found at 180-437 (FDFLKVLGQG…AREVSRAEFF (258 aa)). Residues 186 to 194 (LGQGTFGKV) and Lys-209 each bind ATP. Asp-303 acts as the Proton acceptor in catalysis. One can recognise an AGC-kinase C-terminal domain in the interval 438–515 (KDVDWEATLR…YYVSGSLERS (78 aa)).

The protein belongs to the protein kinase superfamily. AGC Ser/Thr protein kinase family. RAC subfamily. In terms of assembly, interacts with pdk-1, sgk-1, akt-1 and daf-16. Part of a complex containing sgk-1, akt-1 and akt-2. The cofactor is Mg(2+). In terms of tissue distribution, expressed in neurons, muscle cells of the pharynx, rectal gland cells, and spermatheca.

The catalysed reaction is L-seryl-[protein] + ATP = O-phospho-L-seryl-[protein] + ADP + H(+). The enzyme catalyses L-threonyl-[protein] + ATP = O-phospho-L-threonyl-[protein] + ADP + H(+). Phosphorylated and activated by pdk-1. In terms of biological role, acts downstream of PI3 kinase age-1 and kinase pdk-1 in the daf-2/insulin receptor-like transduction pathway. Essential role in regulating developmental arrest at the dauer stage. Phosphorylates Forkhead-related daf-16 and the longevity-promoting skn-1 transcription factors, which inhibits their entry into the nucleus and antagonizes their functions. Role in immune function and pathogen resistance. Downstream of age-1 and together with akt-1 and sgk-1, promotes cell survival during embryonic development. Plays a role in maintaining the gonadal basement membrane through antagonizing akt-1 activity. This chain is Serine/threonine-protein kinase akt-2, found in Caenorhabditis elegans.